A 174-amino-acid chain; its full sequence is NADH-ubiquinone oxidoreductase chain 6 (174 aa).

Helical transmembrane passes span 4–24, 25–45, 48–68, 82–102, and 143–163; these read LIIM…KHPL, SMGL…GIYV, FWFS…LFIY, FNLT…FFII, and LITL…VKIT.

The protein belongs to the complex I subunit 6 family.

It localises to the mitochondrion membrane. The catalysed reaction is a ubiquinone + NADH + 5 H(+)(in) = a ubiquinol + NAD(+) + 4 H(+)(out). Functionally, core subunit of the mitochondrial membrane respiratory chain NADH dehydrogenase (Complex I) that is believed to belong to the minimal assembly required for catalysis. Complex I functions in the transfer of electrons from NADH to the respiratory chain. The immediate electron acceptor for the enzyme is believed to be ubiquinone. The protein is NADH-ubiquinone oxidoreductase chain 6 (ND6) of Anopheles quadrimaculatus (Common malaria mosquito).